Reading from the N-terminus, the 259-residue chain is uncharacterized protein (259 aa).

The signal sequence occupies residues 1–22; the sequence is MKHSKKLLLCISFLLITFFISG. Residue Cys-23 is the site of N-palmitoyl cysteine attachment. A lipid anchor (S-diacylglycerol cysteine) is attached at Cys-23.

The protein belongs to the staphylococcal tandem lipoprotein family.

The protein localises to the cell membrane. This is an uncharacterized protein from Staphylococcus epidermidis (strain ATCC 35984 / DSM 28319 / BCRC 17069 / CCUG 31568 / BM 3577 / RP62A).